The primary structure comprises 466 residues: UDP-N-acetylmuramoylalanine--D-glutamate ligase (466 aa).

121–127 (GTNGKST) contacts ATP.

It belongs to the MurCDEF family.

Its subcellular location is the cytoplasm. The catalysed reaction is UDP-N-acetyl-alpha-D-muramoyl-L-alanine + D-glutamate + ATP = UDP-N-acetyl-alpha-D-muramoyl-L-alanyl-D-glutamate + ADP + phosphate + H(+). It functions in the pathway cell wall biogenesis; peptidoglycan biosynthesis. Its function is as follows. Cell wall formation. Catalyzes the addition of glutamate to the nucleotide precursor UDP-N-acetylmuramoyl-L-alanine (UMA). In Bradyrhizobium diazoefficiens (strain JCM 10833 / BCRC 13528 / IAM 13628 / NBRC 14792 / USDA 110), this protein is UDP-N-acetylmuramoylalanine--D-glutamate ligase.